Here is a 610-residue protein sequence, read N- to C-terminus: MQYSHHCEHLLERLNKQREAGFLCDCTVVIGEFQFKAHRNVLASFSEYFGAIYRSTSENNVFLDQSQVKADGFQKLLEFIYTGTLNLDSWNVKEIHQAADYLKVEEVVTKCKIKMEDFAFIASPSSTEISSITGNIELNQQACLLTLRDYNNREKSEVSTDSVQANPKPRALTKKSSQSKKKKKAFSSQKPGQSKAVQYPSDVLESASVELFLETSKLSSPVVEQIIQGNDSSELELTSVVENTFPTQDIVQTVTVKRKRRKSQSHCALKEHSMSNIASVKSPYELENAGEELDARFSKAKPMCNTCGKVFSEASSLRRHMRIHKGVKPYVCHLCGKAFTQCNQLKTHVRTHTGERPYKCELCDKGFAQKCQLVFHSRMHHGEEKPYKCDVCNLQFATSSNLKIHARKHSGEKPYVCDRCGQRFAQASTLTYHVRRHTGEKPYVCDTCGKAFAVSSSLITHSRKHTGEKPYICGICGKSFISSGELNKHFRSHTGERPFICELCGNSYTDIKNLKKHKTKVHSGTDKNPDCSVDDHAVSEQDSVQRSPLSETLDVKPSDMTLPLALPLGTEDHQMLLPVTDSQSPASDTLLRSTVNGYSEPQLIFLQQLY.

The BTB domain occupies Cys24–Ser89. The interval Ser156–Tyr199 is disordered. Residues Ala171–Ala185 are compositionally biased toward basic residues. 2 consecutive short sequence motifs (nuclear localization signal) follow at residues Lys174–Lys190 and Lys257–Lys262. 8 C2H2-type zinc fingers span residues Pro302–His324, Tyr330–His352, Tyr358–His381, Tyr387–His409, Tyr415–His437, Tyr443–His465, Tyr471–His493, and Phe499–His522. Residues Thr519–Pro548 are disordered. Positions Ser523–Ser539 are enriched in basic and acidic residues.

Belongs to the krueppel C2H2-type zinc-finger protein family. In terms of tissue distribution, mainly expressed in the neuromuscular system. Located in and around synaptic myonuclei in adult muscle. Expression is dysregulated after nerve injury. Also found in the cerebellum, testis, heart, brain and liver.

Its subcellular location is the nucleus. The protein is Myoneurin (Mynn) of Mus musculus (Mouse).